Here is a 372-residue protein sequence, read N- to C-terminus: Phospho-N-acetylmuramoyl-pentapeptide-transferase (372 aa).

The next 10 membrane-spanning stretches (helical) occupy residues 21–41, 71–91, 98–118, 134–154, 176–196, 211–231, 251–271, 275–295, 300–320, and 349–369; these read SLTL…MIFG, TPTM…LLWA, VWIL…DDWL, YFWL…IATL, MIPF…YFVI, GLAI…AYVS, VIIV…FNAH, VFMG…IAVM, IAFA…MLQV, and QVVA…LMTL.

It belongs to the glycosyltransferase 4 family. MraY subfamily. Requires Mg(2+) as cofactor.

It is found in the cell inner membrane. The catalysed reaction is UDP-N-acetyl-alpha-D-muramoyl-L-alanyl-gamma-D-glutamyl-meso-2,6-diaminopimeloyl-D-alanyl-D-alanine + di-trans,octa-cis-undecaprenyl phosphate = di-trans,octa-cis-undecaprenyl diphospho-N-acetyl-alpha-D-muramoyl-L-alanyl-D-glutamyl-meso-2,6-diaminopimeloyl-D-alanyl-D-alanine + UMP. The protein operates within cell wall biogenesis; peptidoglycan biosynthesis. Catalyzes the initial step of the lipid cycle reactions in the biosynthesis of the cell wall peptidoglycan: transfers peptidoglycan precursor phospho-MurNAc-pentapeptide from UDP-MurNAc-pentapeptide onto the lipid carrier undecaprenyl phosphate, yielding undecaprenyl-pyrophosphoryl-MurNAc-pentapeptide, known as lipid I. The sequence is that of Phospho-N-acetylmuramoyl-pentapeptide-transferase from Psychrobacter arcticus (strain DSM 17307 / VKM B-2377 / 273-4).